We begin with the raw amino-acid sequence, 183 residues long: Ribosome rescue factor SmrB (183 aa).

Residues 98 to 173 (LDLHGLTQLQ…GDAALLVLIE (76 aa)) enclose the Smr domain.

Belongs to the SmrB family. In terms of assembly, associates with collided ribosomes, but not with correctly translating polysomes.

Functionally, acts as a ribosome collision sensor. Detects stalled/collided disomes (pairs of ribosomes where the leading ribosome is stalled and a second ribosome has collided with it) and endonucleolytically cleaves mRNA at the 5' boundary of the stalled ribosome. Stalled/collided disomes form a new interface (primarily via the 30S subunits) that binds SmrB. Cleaved mRNA becomes available for tmRNA ligation, leading to ribosomal subunit dissociation and rescue of stalled ribosomes. This is Ribosome rescue factor SmrB from Escherichia fergusonii (strain ATCC 35469 / DSM 13698 / CCUG 18766 / IAM 14443 / JCM 21226 / LMG 7866 / NBRC 102419 / NCTC 12128 / CDC 0568-73).